A 2208-amino-acid polypeptide reads, in one-letter code: RNA-directed RNA polymerase L (2208 aa).

An endonuclease region spans residues 26–284; it reads KDALLSQVHP…LHQDSDTINC (259 aa). The Mn(2+) site is built by Glu-51, Asp-89, and Glu-102. Residue Lys-115 is part of the active site. The RdRp catalytic domain occupies 1171 to 1367; that stretch reads CDMKMAVNNG…YLSSKLNKFV (197 aa). Asp-1329 contributes to the Mg(2+) binding site.

The protein belongs to the Bunyavirales RNA polymerase family. Homomultimer; the oligomeric structure is essential for the polymerase activity. Interacts with nucleoprotein N. Interacts with protein Z; this interaction inhibits viral transcription and replication, Z partially blocks the product exit tunnel for the releasing nascent RNA product. Requires Mn(2+) as cofactor. It depends on Mg(2+) as a cofactor.

It localises to the virion. The protein resides in the host cytoplasm. The enzyme catalyses RNA(n) + a ribonucleoside 5'-triphosphate = RNA(n+1) + diphosphate. Functionally, RNA-dependent RNA polymerase, which is responsible for the replication and transcription of the viral RNA genome using antigenomic RNA as an intermediate. During transcription, synthesizes subgenomic RNAs and assures their capping by a cap-snatching mechanism, which involves the endonuclease activity cleaving the host capped pre-mRNAs. These short capped RNAs are then used as primers for viral transcription. The 3'-end of subgenomic mRNAs molecules are heterogeneous and not polyadenylated. The replicase function is to direct synthesis of antigenomic and genomic RNA which are encapsidated and non capped. As a consequence of the use of the same enzyme for both transcription and replication, these mechanisms need to be well coordinated. These processes may be regulated by proteins N and Z in a dose-dependent manner. Z protein inhibits the viral polymerase L und thus the viral transcription and RNA synthesis. The chain is RNA-directed RNA polymerase L from Homo sapiens (Human).